A 102-amino-acid chain; its full sequence is NADH-quinone oxidoreductase subunit K (102 aa).

3 consecutive transmembrane segments (helical) span residues 6-26 (MHHG…GILV), 30-50 (LIFI…AFVV), and 64-84 (FIFI…LLLL).

It belongs to the complex I subunit 4L family. As to quaternary structure, NDH-1 is composed of 14 different subunits. Subunits NuoA, H, J, K, L, M, N constitute the membrane sector of the complex.

The protein localises to the cell inner membrane. It carries out the reaction a quinone + NADH + 5 H(+)(in) = a quinol + NAD(+) + 4 H(+)(out). Functionally, NDH-1 shuttles electrons from NADH, via FMN and iron-sulfur (Fe-S) centers, to quinones in the respiratory chain. The immediate electron acceptor for the enzyme in this species is believed to be ubiquinone. Couples the redox reaction to proton translocation (for every two electrons transferred, four hydrogen ions are translocated across the cytoplasmic membrane), and thus conserves the redox energy in a proton gradient. In Nitrosospira multiformis (strain ATCC 25196 / NCIMB 11849 / C 71), this protein is NADH-quinone oxidoreductase subunit K.